The primary structure comprises 275 residues: Large ribosomal subunit protein uL2 (275 aa).

Disordered stretches follow at residues 222 to 243 and 256 to 275; these read GSVMNPTDHPHGGGEGRAPIGR and GGKTRRKKPSDNMIVRKRKP.

The protein belongs to the universal ribosomal protein uL2 family. In terms of assembly, part of the 50S ribosomal subunit. Forms a bridge to the 30S subunit in the 70S ribosome.

Functionally, one of the primary rRNA binding proteins. Required for association of the 30S and 50S subunits to form the 70S ribosome, for tRNA binding and peptide bond formation. It has been suggested to have peptidyltransferase activity; this is somewhat controversial. Makes several contacts with the 16S rRNA in the 70S ribosome. The chain is Large ribosomal subunit protein uL2 from Syntrophomonas wolfei subsp. wolfei (strain DSM 2245B / Goettingen).